Here is a 519-residue protein sequence, read N- to C-terminus: Protein nucleotidyltransferase YdiU (519 aa).

8 residues coordinate ATP: Gly100, Gly102, Arg103, Lys123, Asp135, Gly136, Arg193, and Arg200. Asp270 acts as the Proton acceptor in catalysis. Asn271 and Asp280 together coordinate Mg(2+). ATP is bound at residue Asp280.

Belongs to the SELO family. Requires Mg(2+) as cofactor. It depends on Mn(2+) as a cofactor.

It carries out the reaction L-seryl-[protein] + ATP = 3-O-(5'-adenylyl)-L-seryl-[protein] + diphosphate. The catalysed reaction is L-threonyl-[protein] + ATP = 3-O-(5'-adenylyl)-L-threonyl-[protein] + diphosphate. It catalyses the reaction L-tyrosyl-[protein] + ATP = O-(5'-adenylyl)-L-tyrosyl-[protein] + diphosphate. The enzyme catalyses L-histidyl-[protein] + UTP = N(tele)-(5'-uridylyl)-L-histidyl-[protein] + diphosphate. It carries out the reaction L-seryl-[protein] + UTP = O-(5'-uridylyl)-L-seryl-[protein] + diphosphate. The catalysed reaction is L-tyrosyl-[protein] + UTP = O-(5'-uridylyl)-L-tyrosyl-[protein] + diphosphate. In terms of biological role, nucleotidyltransferase involved in the post-translational modification of proteins. It can catalyze the addition of adenosine monophosphate (AMP) or uridine monophosphate (UMP) to a protein, resulting in modifications known as AMPylation and UMPylation. The protein is Protein nucleotidyltransferase YdiU of Xylella fastidiosa (strain 9a5c).